The sequence spans 200 residues: HTH-type transcriptional regulator BetI (200 aa).

The region spanning 8-68 is the HTH tetR-type domain; that stretch reads DIRKPQLVQA…ETMREILRQL (61 aa). Positions 31-50 form a DNA-binding region, H-T-H motif; the sequence is SIALISKEAGVSTGIINHYF.

It functions in the pathway amine and polyamine biosynthesis; betaine biosynthesis via choline pathway [regulation]. In terms of biological role, repressor involved in the biosynthesis of the osmoprotectant glycine betaine. It represses transcription of the choline transporter BetT and the genes of BetAB involved in the synthesis of glycine betaine. The protein is HTH-type transcriptional regulator BetI of Vibrio atlanticus (strain LGP32) (Vibrio splendidus (strain Mel32)).